The chain runs to 184 residues: Ribosome maturation factor RimM (184 aa).

A PRC barrel domain is found at Asp-111–Tyr-184.

It belongs to the RimM family. In terms of assembly, binds ribosomal protein uS19.

The protein resides in the cytoplasm. An accessory protein needed during the final step in the assembly of 30S ribosomal subunit, possibly for assembly of the head region. Essential for efficient processing of 16S rRNA. May be needed both before and after RbfA during the maturation of 16S rRNA. It has affinity for free ribosomal 30S subunits but not for 70S ribosomes. This chain is Ribosome maturation factor RimM, found in Ralstonia nicotianae (strain ATCC BAA-1114 / GMI1000) (Ralstonia solanacearum).